Reading from the N-terminus, the 342-residue chain is Pre-mRNA-splicing factor 18 (342 aa).

Met1 carries the post-translational modification N-acetylmethionine.

This sequence belongs to the PRP18 family. In terms of assembly, heterodimer with PPIH. Interacts with PRPF4 and with the spliceosome. Part of a complex containing U4/U6 snRNPs. Also detected in the cytoplasm. In terms of tissue distribution, detected in brain, heart, liver and skeletal muscle.

Its subcellular location is the nucleus speckle. In terms of biological role, participates in the second step of pre-mRNA splicing. Down-regulates the expression of potassium channel subunits. The chain is Pre-mRNA-splicing factor 18 (Prpf18) from Rattus norvegicus (Rat).